Consider the following 2542-residue polypeptide: Unconventional myosin-IXa (2542 aa).

Residues 14–112 (NEHTLRIYPG…YRFLLREKNL (99 aa)) enclose the Ras-associating domain. Positions 146–1017 (KDFDDLCSLP…ERQHLQDLLH (872 aa)) constitute a Myosin motor domain. Residues 175–195 (IYTYVGSILIAINPFKFLPIY) traverse the membrane as a helical segment. 239–246 (GESGSGKT) is an ATP binding site. At serine 755 the chain carries Phosphoserine. An actin-binding region spans residues 908–919 (QAEPYFVKCIRS). IQ domains follow at residues 1021 to 1041 (LRRI…QQFL), 1043 to 1072 (LRQA…EKDA), 1075 to 1104 (MASA…AAVI), 1116 to 1145 (RHKA…KIIL), and 1139 to 1168 (QRNK…EKLR). The tract at residues 1022 to 1163 (RRIVLLQRWF…RARQRCNALK (142 aa)) is neck or regulatory domain. The segment at 1164–2505 (EEKLREAKLE…LKNVKNSPQK (1342 aa)) is tail. Basic and acidic residues predominate over residues 1221–1240 (RESSMDFSKESPDKQQERGR). Residues 1221 to 1276 (RESSMDFSKESPDKQQERGRRQSGTDLQEDVIVRQRPKSLEDLHQKKVGRAKRESR) form a disordered region. At serine 1243 the chain carries Phosphoserine. At threonine 1245 the chain carries Phosphothreonine. Serine 1259 is subject to Phosphoserine. The stretch at 1265-1292 (QKKVGRAKRESRRMRELEQAIFSLELLK) forms a coiled coil. Positions 1266 to 1276 (KKVGRAKRESR) are enriched in basic residues. Serine 1300 and serine 1318 each carry phosphoserine. Residues 1342-1401 (KSKPESLILDEGELKISSPNTFTNPKSQDNALSASSETSSTLAGKGASSDSEHLKNGTAK) form a disordered region. The segment covering 1358 to 1371 (SSPNTFTNPKSQDN) has biased composition (polar residues). Low complexity predominate over residues 1372-1384 (ALSASSETSSTLA). Basic and acidic residues predominate over residues 1391-1401 (DSEHLKNGTAK). The stretch at 1492–1539 (TVLKKLEKLNIEKEKRQKQLQQQNEKEMMEQIRQQTDILEKERKAFKT) forms a coiled coil. Disordered regions lie at residues 1650 to 1675 (RSTE…REGS), 1693 to 1727 (SGNP…SVDE), 1767 to 1793 (GKQG…PGPD), and 1806 to 1841 (QYHP…KRGV). A compositionally biased stretch (basic and acidic residues) spans 1665-1675 (HRSDDPSREGS). Over residues 1715-1726 (QQETSQRFSSVD) the composition is skewed to polar residues. The segment covering 1821 to 1833 (CRKEFKENKEPSP) has biased composition (basic and acidic residues). Serine 1950 carries the phosphoserine modification. Phorbol-ester/DAG-type zinc fingers lie at residues 2001–2050 (GHIF…TAKC) and 2068–2119 (SRLT…DTDA). One can recognise a Rho-GAP domain in the interval 2065 to 2253 (VELSRLTSED…LIVVEQMNKY (189 aa)). A phosphoserine mark is found at serine 2293 and serine 2296. The stretch at 2324-2360 (TDQQQAAMQQEEKVLTEQIENLQKEKEELTFEMLVLE) forms a coiled coil. A disordered region spans residues 2361-2443 (PRASDDETLE…NTTSSHGTRK (83 aa)). A compositionally biased stretch (polar residues) spans 2377–2386 (TADSSENLNM). The span at 2420-2438 (SLDSVSSSVSSCLSNTTSS) shows a compositional bias: low complexity. Serine 2458 carries the phosphoserine modification. Residues 2465–2530 (TEGPLGQAKS…TVDSDCSSTQ (66 aa)) form a disordered region.

It belongs to the TRAFAC class myosin-kinesin ATPase superfamily. Myosin family. Post-translationally, phosphorylated by ALPK1 following monosodium urate monohydrate (MSU)-induced inflammation. Expressed in the eye, lung, liver, brain, heart, kidney, skeletal muscle and spleen. No detection was found in liver. In the brain, expressed in the ependymal cells of the third ventricle and the aqueduct.

It localises to the membrane. The protein resides in the cytoplasm. The protein localises to the synapse. Its subcellular location is the cell projection. It is found in the growth cone. Functionally, myosins are actin-based motor molecules with ATPase activity. Unconventional myosins serve in intracellular movements. Regulates Rho by stimulating it's GTPase activity in neurons. Required for the regulation of neurite branching and motor neuron axon guidance. In Mus musculus (Mouse), this protein is Unconventional myosin-IXa (Myo9a).